We begin with the raw amino-acid sequence, 184 residues long: Ribosome-recycling factor (184 aa).

The protein belongs to the RRF family.

Its subcellular location is the cytoplasm. In terms of biological role, responsible for the release of ribosomes from messenger RNA at the termination of protein biosynthesis. May increase the efficiency of translation by recycling ribosomes from one round of translation to another. This Borrelia recurrentis (strain A1) protein is Ribosome-recycling factor.